A 222-amino-acid polypeptide reads, in one-letter code: CMKAAPMKEVSVRGQGSLVYPGLRTQGNLETLSGPNDATRGLTSLADTFEHVIEELLDEQQVIQPSKENKDADLYSSRVMLSSQVPLEPPLLFLLEEYKNYLDAANMSMRVRRHSDPARRGELSVCDSTSEWVTAAEKKTAVDMSGATVTVLEKVPVPKGQLKQYFYETKCSSKGYAKEGCRGIDKRYWNSQCRTTQSYVRALTMDNKKRVGWRFIRIDTSC.

The signal sequence occupies residues 1-4 (CMKA). A propeptide spanning residues 5 to 113 (APMKEVSVRG…AANMSMRVRR (109 aa)) is cleaved from the precursor. N106 carries an N-linked (GlcNAc...) asparagine glycan. Cystine bridges form between C126-C193 and C171-C222.

The protein belongs to the NGF-beta family.

The protein resides in the secreted. In terms of biological role, promotes the survival of neuronal populations that are all located either in the central nervous system or directly connected to it. This is Neurotrophic factor BDNF precursor form (BDNF) from Xenopeltis unicolor (Sunbeam snake).